Reading from the N-terminus, the 596-residue chain is Thioredoxin reductase 1, mitochondrial (596 aa).

Residues 59–87 (LTGQRGSRDSTGATGGNAPAGSGAGAPPP) form a disordered region. A compositionally biased stretch (low complexity) spans 68–79 (STGATGGNAPAG). Residues 120–126 (IGGGSAG), 143–147 (LDFVK), 159–170 (GGTCVNVGCIPK), 233–235 (GLG), 262–266 (AVGGR), S282, F286, and Y302 contribute to the FAD site. Cysteines 162 and 167 form a disulfide. Residues 322-328 (VRSIVLR) and P355 contribute to the NADP(+) site. FAD-binding positions include 392-399 (RKGLVDDL), 429-432 (VGDI), 438-443 (ELTPVA), and F472. Residue H569 is the Proton acceptor of the active site. Residue P570 participates in FAD binding. Cysteines 594 and 595 form a disulfide.

The protein belongs to the class-I pyridine nucleotide-disulfide oxidoreductase family. Homodimer. FAD is required as a cofactor. In terms of tissue distribution, during embryogenesis, expression is seen in germ cell progenitors, developing midgut, hindgut and proventriculus.

It localises to the mitochondrion. Its subcellular location is the cytoplasm. It catalyses the reaction [thioredoxin]-dithiol + NADP(+) = [thioredoxin]-disulfide + NADPH + H(+). Functionally, thioredoxin system is a major player in glutathione metabolism, due to the demonstrated absence of a glutathione reductase. Functionally interacts with the Sod/Cat reactive oxidation species (ROS) defense system and thereby has a role in preadult development and life span. Lack of a glutathione reductase suggests antioxidant defense in Drosophila, and probably in related insects, differs fundamentally from that in other organisms. This is Thioredoxin reductase 1, mitochondrial from Drosophila melanogaster (Fruit fly).